A 375-amino-acid chain; its full sequence is tRNA-specific 2-thiouridylase MnmA (375 aa).

ATP is bound by residues 8–15 (GLSGGVDS) and M34. The interval 104-106 (NPD) is interaction with target base in tRNA. The active-site Nucleophile is C109. A disulfide bridge connects residues C109 and C205. ATP is bound at residue G133. An interaction with tRNA region spans residues 155-157 (KDQ). C205 (cysteine persulfide intermediate) is an active-site residue. The segment at 313 to 314 (RY) is interaction with tRNA.

The protein belongs to the MnmA/TRMU family.

It is found in the cytoplasm. It carries out the reaction S-sulfanyl-L-cysteinyl-[protein] + uridine(34) in tRNA + AH2 + ATP = 2-thiouridine(34) in tRNA + L-cysteinyl-[protein] + A + AMP + diphosphate + H(+). In terms of biological role, catalyzes the 2-thiolation of uridine at the wobble position (U34) of tRNA, leading to the formation of s(2)U34. This Acholeplasma laidlawii (strain PG-8A) protein is tRNA-specific 2-thiouridylase MnmA.